Reading from the N-terminus, the 309-residue chain is Putative taste receptor type 2 member 33 (309 aa).

Methionine 1 is a topological domain (extracellular). A helical membrane pass occupies residues 2 to 22 (VYFLPIIFSILVVFAFVLGNF). Topologically, residues 23-46 (SNGFIALVNVIDWVKRQKISSADQ) are cytoplasmic. A helical transmembrane segment spans residues 47–67 (ILTALVVSRVGLLWVILLHWY). Over 68–86 (ANVFNSALYSLEVRIVASN) the chain is Extracellular. A glycan (N-linked (GlcNAc...) asparagine) is linked at asparagine 86. Residues 87–107 (ISAVINHFSIWLAASLSIFYL) traverse the membrane as a helical segment. At 108-127 (LKIANFSNLIFLHLKKRIKS) the chain is on the cytoplasmic side. The helical transmembrane segment at 128–148 (VVLVILLGPLVFLICNLAVIT) threads the bilayer. Residues 149 to 181 (MDERVWTKEYEGNVTWKIKLRNAIHLSSLTVTT) are Extracellular-facing. The N-linked (GlcNAc...) asparagine glycan is linked to asparagine 161. A helical transmembrane segment spans residues 182–202 (LANLIPFTLSLICFLLLICSL). The Cytoplasmic segment spans residues 203 to 229 (CKHLKKMQLHSKGSQDPSTKVHIKALQ). The helical transmembrane segment at 230–250 (TVISFLMLCAIYFLSIMISVW) threads the bilayer. At 251–259 (NLRSLENKP) the chain is on the extracellular side. A helical transmembrane segment spans residues 260-280 (VFMFCKAIRFSYPSIHPFILI). Residues 281 to 309 (WGNKKLKQTFLSVFWQVRYWVKGEKPSSP) lie on the Cytoplasmic side of the membrane.

This sequence belongs to the G-protein coupled receptor T2R family.

The protein localises to the membrane. Its function is as follows. Putative taste receptor which may play a role in the perception of bitterness. This chain is Putative taste receptor type 2 member 33, found in Homo sapiens (Human).